The following is a 322-amino-acid chain: RNA-binding motif protein, X-linked 2 (322 aa).

Residue Lys8 forms a Glycyl lysine isopeptide (Lys-Gly) (interchain with G-Cter in SUMO2) linkage. The RRM domain maps to 36–114 (AWIFLGGLPY…RTIRVDHVSN (79 aa)). Residues 134-322 (KGCGARTPSP…SSNPSDRWRH (189 aa)) are disordered. At Thr140 the chain carries Phosphothreonine. Ser149 carries the post-translational modification Phosphoserine. Positions 155 to 171 (TKKHKKDKKEKKKKKKE) are enriched in basic residues. Phosphoserine occurs at positions 186 and 188. Positions 195–223 (KEKDDTGPKKHSSKNSERAQKSEPREGQK) are enriched in basic and acidic residues. Ser232 carries the phosphoserine modification. Basic and acidic residues predominate over residues 240–274 (RELKKEKPKHEHKSSSRREAREEKTRIRDRGRSSD). Residue Lys243 forms a Glycyl lysine isopeptide (Lys-Gly) (interchain with G-Cter in SUMO2) linkage. Ser272 is modified (phosphoserine). Residues 289 to 308 (YRSRSRSRDKSHRHKRARRS) are compositionally biased toward basic residues. Ser314 carries the post-translational modification Phosphoserine.

It belongs to the IST3 family. In terms of assembly, part of the activated spliceosome B/catalytic step 1 spliceosome, one of the forms of the spliceosome which has a well-formed active site but still cannot catalyze the branching reaction and is composed of at least 52 proteins, the U2, U5 and U6 snRNAs and the pre-mRNA. Component of the minor spliceosome, which splices U12-type introns.

Its subcellular location is the nucleus. In terms of biological role, involved in pre-mRNA splicing as component of the activated spliceosome. As a component of the minor spliceosome, involved in the splicing of U12-type introns in pre-mRNAs. The protein is RNA-binding motif protein, X-linked 2 (RBMX2) of Homo sapiens (Human).